The chain runs to 364 residues: F-box/LRR-repeat protein At1g55660 (364 aa).

The 47-residue stretch at 52–98 folds into the F-box domain; that stretch reads MDKISQLPDELLVKVLSFLSTKDAVSTSILSMRWKSLWMWLPKLEYN. 6 LRR repeats span residues 158–179, 185–206, 207–228, 233–254, 256–277, and 279–300; these read NVRELSLKLFNFAELPTKLPKS, SIVILKLKDEILVDVPRKVCLP, SLKTLFLGRVTYSDANSLHRLL, VLEDLVMERDKIDNLGKLSVIV, SLQRLTLKMSRPCHLDGLKMNS, and SLKYLKVIDERLESDSDDESDS.

This is F-box/LRR-repeat protein At1g55660 from Arabidopsis thaliana (Mouse-ear cress).